A 402-amino-acid polypeptide reads, in one-letter code: Type II NADH:quinone oxidoreductase (402 aa).

Residues 12-16 (GAGYA), 39-40 (NK), and V83 contribute to the FAD site. E172 is an active-site residue. FAD contacts are provided by residues D302, 319-320 (AQ), and K379.

It belongs to the NADH dehydrogenase family. Requires FAD as cofactor.

Its subcellular location is the cell membrane. The catalysed reaction is a quinone + NADH + H(+) = a quinol + NAD(+). In terms of biological role, alternative, nonproton pumping NADH:quinone oxidoreductase that delivers electrons to the respiratory chain by oxidation of NADH and reduction of quinones, and contributes to the regeneration of NAD(+). This is Type II NADH:quinone oxidoreductase from Staphylococcus haemolyticus (strain JCSC1435).